Here is a 564-residue protein sequence, read N- to C-terminus: Ubiquitin carboxyl-terminal hydrolase 39 (564 aa).

The disordered stretch occupies residues 1-96 (MSSRSKRQSH…VRAKNGRVDS (96 aa)). Over residues 28 to 39 (IKKERDREKEPE) the composition is skewed to basic and acidic residues. The residue at position 46 (serine 46) is a Phosphoserine. Residue lysine 51 forms a Glycyl lysine isopeptide (Lys-Gly) (interchain with G-Cter in SUMO2) linkage. Over residues 59–69 (REVPAPALPVV) the composition is skewed to low complexity. Residue serine 81 is modified to Phosphoserine. A compositionally biased stretch (basic and acidic residues) spans 84 to 96 (EREVRAKNGRVDS). The UBP-type; degenerate zinc finger occupies 102 to 199 (RHCPYLDTIN…YVLKPTFTKQ (98 aa)). Zn(2+) contacts are provided by cysteine 135, cysteine 138, histidine 154, and histidine 160. In terms of domain architecture, USP spans 224–554 (VGLNNIKAND…EAYIQIWKRR (331 aa)).

Belongs to the peptidase C19 family. In terms of assembly, the U4/U6-U5 tri-snRNP complex is a building block of the precatalytic spliceosome (spliceosome B complex). Component of the U4/U6-U5 tri-snRNP complex composed of the U4, U6 and U5 snRNAs and at least PRPF3, PRPF4, PRPF6, PRPF8, PRPF31, SNRNP200, TXNL4A, SNRNP40, SNRPB, SNRPD1, SNRPD2, SNRPD3, SNRPE, SNRPF, SNRPG, DDX23, CD2BP2, PPIH, SNU13, EFTUD2, SART1 and USP39, plus LSM2, LSM3, LSM4, LSM5, LSM6, LSM7 and LSM8.

It is found in the nucleus. The enzyme catalyses Thiol-dependent hydrolysis of ester, thioester, amide, peptide and isopeptide bonds formed by the C-terminal Gly of ubiquitin (a 76-residue protein attached to proteins as an intracellular targeting signal).. Deubiquitinating enzyme that plays a role in many cellular processes including cellular antiviral response, epithelial morphogenesis, DNA repair or B-cell development. Plays a role in pre-mRNA splicing as a component of the U4/U6-U5 tri-snRNP, one of the building blocks of the precatalytic spliceosome. Specifically regulates immunoglobulin gene rearrangement in a spliceosome-dependent manner, which involves modulating chromatin interactions at the Igh locus and therefore plays an essential role in B-cell development. Regulates AURKB mRNA levels, and thereby plays a role in cytokinesis and in the spindle checkpoint. Regulates apoptosis and G2/M cell cycle checkpoint in response to DNA damage by deubiquitinating and stabilizing CHK2. Also plays an important role in DNA repair by controlling the recruitment of XRCC4/LIG4 to DNA double-strand breaks for non-homologous end-joining repair. Participates in antiviral activity by affecting the type I IFN signaling by stabilizing STAT1 and decreasing its 'Lys-6'-linked ubiquitination. Contributes to non-canonical Wnt signaling during epidermal differentiation. Acts as a negative regulator NF-kappa-B activation through deubiquitination of 'Lys-48'-linked ubiquitination of NFKBIA. This Mus musculus (Mouse) protein is Ubiquitin carboxyl-terminal hydrolase 39.